Reading from the N-terminus, the 500-residue chain is Cytochrome P450 71B26 (500 aa).

Residues 1–21 (MDSIWILSLLFFIIFLLLAAF) form a helical membrane-spanning segment. Residue Cys-440 participates in heme binding.

This sequence belongs to the cytochrome P450 family. Heme serves as cofactor.

Its subcellular location is the membrane. This Arabidopsis thaliana (Mouse-ear cress) protein is Cytochrome P450 71B26 (CYP71B26).